The chain runs to 101 residues: Small ribosomal subunit protein uS14 (101 aa).

Belongs to the universal ribosomal protein uS14 family. As to quaternary structure, part of the 30S ribosomal subunit. Contacts proteins S3 and S10.

Its function is as follows. Binds 16S rRNA, required for the assembly of 30S particles and may also be responsible for determining the conformation of the 16S rRNA at the A site. In Hydrogenovibrio crunogenus (strain DSM 25203 / XCL-2) (Thiomicrospira crunogena), this protein is Small ribosomal subunit protein uS14.